The sequence spans 463 residues: ATP sulfurylase 1, chloroplastic (463 aa).

The N-terminal 48 residues, 1–48 (MASMAAVLSKTPFLSQPLTKSSPNSDLPFAAVSFPSKSLRRRVGSIRA), are a transit peptide targeting the chloroplast.

This sequence belongs to the sulfate adenylyltransferase family. As to quaternary structure, homotetramer.

Its subcellular location is the plastid. The protein localises to the chloroplast stroma. It catalyses the reaction sulfate + ATP + H(+) = adenosine 5'-phosphosulfate + diphosphate. It functions in the pathway sulfur metabolism; hydrogen sulfide biosynthesis; sulfite from sulfate: step 1/3. Functionally, mediates selenate (Se) reduction, and promotes Se and sulfur (S) uptake and assimilation. The protein is ATP sulfurylase 1, chloroplastic (APS1) of Arabidopsis thaliana (Mouse-ear cress).